Reading from the N-terminus, the 144-residue chain is Ribonuclease H (144 aa).

One can recognise an RNase H type-1 domain in the interval 1-136; the sequence is MKIVTLFSDG…CDQMARNEAL (136 aa). 4 residues coordinate Mg(2+): Asp9, Glu47, Asp69, and Asp128.

The protein belongs to the RNase H family. In terms of assembly, monomer. It depends on Mg(2+) as a cofactor.

It is found in the cytoplasm. It catalyses the reaction Endonucleolytic cleavage to 5'-phosphomonoester.. Functionally, endonuclease that specifically degrades the RNA of RNA-DNA hybrids. This is Ribonuclease H from Campylobacter concisus (strain 13826).